The following is a 96-amino-acid chain: Co-chaperonin GroES (96 aa).

Belongs to the GroES chaperonin family. In terms of assembly, heptamer of 7 subunits arranged in a ring. Interacts with the chaperonin GroEL.

The protein resides in the cytoplasm. In terms of biological role, together with the chaperonin GroEL, plays an essential role in assisting protein folding. The GroEL-GroES system forms a nano-cage that allows encapsulation of the non-native substrate proteins and provides a physical environment optimized to promote and accelerate protein folding. GroES binds to the apical surface of the GroEL ring, thereby capping the opening of the GroEL channel. This is Co-chaperonin GroES from Nitrosospira multiformis (strain ATCC 25196 / NCIMB 11849 / C 71).